The chain runs to 485 residues: Rhamnulokinase (485 aa).

Position 12–16 (12–16) interacts with ATP; the sequence is ATSGR. Substrate-binding positions include Gly80 and 238–240; that span reads HDT. Residue Asp239 is the Proton acceptor of the active site. Residue Thr261 coordinates ATP. Asn298 is a substrate binding site. Position 306 (Glu306) interacts with ATP. Cys355 and Cys372 form a disulfide bridge. ATP is bound at residue Gly404.

This sequence belongs to the rhamnulokinase family. The cofactor is Mg(2+).

The catalysed reaction is L-rhamnulose + ATP = L-rhamnulose 1-phosphate + ADP + H(+). The protein operates within carbohydrate degradation; L-rhamnose degradation; glycerone phosphate from L-rhamnose: step 2/3. Its function is as follows. Involved in the catabolism of L-rhamnose (6-deoxy-L-mannose). Catalyzes the transfer of the gamma-phosphate group from ATP to the 1-hydroxyl group of L-rhamnulose to yield L-rhamnulose 1-phosphate. This Bacteroides thetaiotaomicron (strain ATCC 29148 / DSM 2079 / JCM 5827 / CCUG 10774 / NCTC 10582 / VPI-5482 / E50) protein is Rhamnulokinase.